The sequence spans 353 residues: Photosystem II D2 protein (353 aa).

T2 carries the post-translational modification N-acetylthreonine. Residue T2 is modified to Phosphothreonine. A helical membrane pass occupies residues 41–61 (CAYFALGGWFTGTTFVTSWYT). H118 lines the chlorophyll a pocket. Residues 125 to 141 (GFMLRQFELARSVQLRP) form a helical membrane-spanning segment. Positions 130 and 143 each coordinate pheophytin a. The helical transmembrane segment at 153-166 (VFVSVFLIYPLGQS) threads the bilayer. A chlorophyll a-binding site is contributed by H198. Residues 208–228 (AALLCAIHGATVENTLFEDGD) form a helical membrane-spanning segment. 2 residues coordinate a plastoquinone: H215 and F262. Residue H215 coordinates Fe cation. H269 provides a ligand contact to Fe cation. Residues 279–295 (GLWMSAIGVVGLALNLR) traverse the membrane as a helical segment.

The protein belongs to the reaction center PufL/M/PsbA/D family. PSII is composed of 1 copy each of membrane proteins PsbA, PsbB, PsbC, PsbD, PsbE, PsbF, PsbH, PsbI, PsbJ, PsbK, PsbL, PsbM, PsbT, PsbX, PsbY, PsbZ, Psb30/Ycf12, at least 3 peripheral proteins of the oxygen-evolving complex and a large number of cofactors. It forms dimeric complexes. The D1/D2 heterodimer binds P680, chlorophylls that are the primary electron donor of PSII, and subsequent electron acceptors. It shares a non-heme iron and each subunit binds pheophytin, quinone, additional chlorophylls, carotenoids and lipids. There is also a Cl(-1) ion associated with D1 and D2, which is required for oxygen evolution. The PSII complex binds additional chlorophylls, carotenoids and specific lipids. is required as a cofactor.

It is found in the plastid. It localises to the chloroplast thylakoid membrane. It catalyses the reaction 2 a plastoquinone + 4 hnu + 2 H2O = 2 a plastoquinol + O2. Functionally, photosystem II (PSII) is a light-driven water:plastoquinone oxidoreductase that uses light energy to abstract electrons from H(2)O, generating O(2) and a proton gradient subsequently used for ATP formation. It consists of a core antenna complex that captures photons, and an electron transfer chain that converts photonic excitation into a charge separation. The D1/D2 (PsbA/PsbD) reaction center heterodimer binds P680, the primary electron donor of PSII as well as several subsequent electron acceptors. D2 is needed for assembly of a stable PSII complex. The sequence is that of Photosystem II D2 protein from Oryza nivara (Indian wild rice).